Consider the following 304-residue polypeptide: uncharacterized protein (304 aa).

A signal peptide spans 1 to 22; that stretch reads MKKSLTLLILLLCSLLFSTVLS. The disordered stretch occupies residues 91–111; that stretch reads PAPAPTPESSDPDEPMKPDDS. 4 N-linked (GlcNAc...) asparagine glycosylation sites follow: Asn-133, Asn-160, Asn-183, and Asn-233. A lipid anchor (GPI-anchor amidated serine) is attached at Ser-282. Residues 283-304 constitute a propeptide, removed in mature form; the sequence is SSHLFGVLPFLPLVLCIFLFLL.

Its subcellular location is the cell membrane. This is an uncharacterized protein from Arabidopsis thaliana (Mouse-ear cress).